A 263-amino-acid polypeptide reads, in one-letter code: uncharacterized protein (263 aa).

An N-terminal signal peptide occupies residues 1-22 (MEYLKRLALLISVIILTIFIMG). Cys23 carries N-palmitoyl cysteine lipidation. Cys23 is lipidated: S-diacylglycerol cysteine.

It belongs to the staphylococcal tandem lipoprotein family.

The protein localises to the cell membrane. This is an uncharacterized protein from Staphylococcus aureus (strain USA300).